The primary structure comprises 149 residues: UPF0102 protein Bpro_0391 (149 aa).

The disordered stretch occupies residues 1 to 30; sequence MWFSRKQVVKPPPDGSRAQPGQVTTKSRGD.

This sequence belongs to the UPF0102 family.

The sequence is that of UPF0102 protein Bpro_0391 from Polaromonas sp. (strain JS666 / ATCC BAA-500).